A 303-amino-acid chain; its full sequence is tRNA (guanine-N(7)-)-methyltransferase (303 aa).

Residues 1-64 (MPKPHQVQVI…STSDKISLPR (64 aa)) form a disordered region. Over residues 10-38 (IKDRETQLREQQEAESKRRTYRDVKEETR) the composition is skewed to basic and acidic residues. S-adenosyl-L-methionine-binding positions include G118, 141 to 142 (EI), 177 to 178 (NA), and C197. The active site involves D200. 275-277 (TEE) is an S-adenosyl-L-methionine binding site.

This sequence belongs to the class I-like SAM-binding methyltransferase superfamily. TrmB family. As to quaternary structure, forms a complex with TRM82.

The protein localises to the nucleus. It carries out the reaction guanosine(46) in tRNA + S-adenosyl-L-methionine = N(7)-methylguanosine(46) in tRNA + S-adenosyl-L-homocysteine. It functions in the pathway tRNA modification; N(7)-methylguanine-tRNA biosynthesis. Its function is as follows. Catalyzes the formation of N(7)-methylguanine at position 46 (m7G46) in tRNA. This chain is tRNA (guanine-N(7)-)-methyltransferase, found in Scheffersomyces stipitis (strain ATCC 58785 / CBS 6054 / NBRC 10063 / NRRL Y-11545) (Yeast).